Reading from the N-terminus, the 317-residue chain is Urease accessory protein 6 (317 aa).

The protein belongs to the UreF family. URE4, URE6 and URE7 may form a complex that acts as a GTP-hydrolysis-dependent molecular chaperone, activating the urease apoprotein URE1.

In terms of biological role, urease accessory protein required for the maturation and activation of urease via the functional incorporation of the urease nickel metallocenter. Plays a role in host brain invasion. The polypeptide is Urease accessory protein 6 (Cryptococcus neoformans var. grubii serotype A (strain H99 / ATCC 208821 / CBS 10515 / FGSC 9487) (Filobasidiella neoformans var. grubii)).